The chain runs to 339 residues: Proto-oncogene serine/threonine-protein kinase mos (339 aa).

A Protein kinase domain is found at 61 to 335 (VCLLHRLGSG…LLQKDLKAFR (275 aa)). ATP-binding positions include 67 to 75 (LGSGGFGSV) and K88. The active-site Proton acceptor is D196.

This sequence belongs to the protein kinase superfamily. Ser/Thr protein kinase family. Interacts with MAP2K1/MEK1. As to expression, expressed mainly in gonadal tissues, and cardiac and skeletal muscles.

It localises to the cytoplasm. It carries out the reaction L-seryl-[protein] + ATP = O-phospho-L-seryl-[protein] + ADP + H(+). It catalyses the reaction L-threonyl-[protein] + ATP = O-phospho-L-threonyl-[protein] + ADP + H(+). Serine/threonine kinase involved in the regulation of MAPK signaling. Is an activator of the ERK1/2 signaling cascade playing an essential role in the stimulation of oocyte maturation. In Rattus norvegicus (Rat), this protein is Proto-oncogene serine/threonine-protein kinase mos.